The primary structure comprises 268 residues: Esterase PIR7B (268 aa).

Serine 86 (acyl-ester intermediate) is an active-site residue. Residues aspartate 218 and histidine 246 each act as charge relay system in the active site.

It belongs to the AB hydrolase superfamily.

In terms of biological role, exhibits esterase activity towards naphthol AS-acetate in vitro. This is Esterase PIR7B (PIR7B) from Oryza sativa subsp. japonica (Rice).